A 125-amino-acid chain; its full sequence is Ribosome-binding factor A (125 aa).

It belongs to the RbfA family. Monomer. Binds 30S ribosomal subunits, but not 50S ribosomal subunits or 70S ribosomes.

Its subcellular location is the cytoplasm. Functionally, one of several proteins that assist in the late maturation steps of the functional core of the 30S ribosomal subunit. Associates with free 30S ribosomal subunits (but not with 30S subunits that are part of 70S ribosomes or polysomes). Required for efficient processing of 16S rRNA. May interact with the 5'-terminal helix region of 16S rRNA. In Desulfitobacterium hafniense (strain DSM 10664 / DCB-2), this protein is Ribosome-binding factor A.